Consider the following 440-residue polypeptide: Chromosome partition protein MukF (440 aa).

Residues 208–236 (LSETSGTLRELQDTLEAAGDKLQANLLRI) form a leucine-zipper region.

The protein belongs to the MukF family. In terms of assembly, interacts, and probably forms a ternary complex, with MukE and MukB via its C-terminal region. The complex formation is stimulated by calcium or magnesium. It is required for an interaction between MukE and MukB.

Its subcellular location is the cytoplasm. It localises to the nucleoid. Its function is as follows. Involved in chromosome condensation, segregation and cell cycle progression. May participate in facilitating chromosome segregation by condensation DNA from both sides of a centrally located replisome during cell division. Not required for mini-F plasmid partitioning. Probably acts via its interaction with MukB and MukE. Overexpression results in anucleate cells. It has a calcium binding activity. In Citrobacter koseri (strain ATCC BAA-895 / CDC 4225-83 / SGSC4696), this protein is Chromosome partition protein MukF.